A 1097-amino-acid chain; its full sequence is Putative regulator of nonsense transcripts 1 (1097 aa).

Low complexity predominate over residues 42-53 (SQTQTQGHTQSQ). A disordered region spans residues 42–67 (SQTQTQGHTQSQLDNQLNGPDDGLHN). In terms of domain architecture, Upf1 CH-rich spans 96–254 (TKDLPVHACR…NKLEELWKDN (159 aa)). Cysteine 104, cysteine 108, cysteine 119, serine 122, cysteine 127, histidine 137, histidine 141, cysteine 147, cysteine 165, cysteine 168, cysteine 191, and cysteine 195 together coordinate Zn(2+). The C3H stretch occupies residues 104–137 (CRSYCGIHDPACVVYCNTSKKWFCNGRGNTSGSH). The interval 119–147 (CNTSKKWFCNGRGNTSGSHIVNHLVRAKC) is CC/SHH/C. A C4 region spans residues 165–195 (CYNCGCRNVFLLGFIPAKADSVVVLLCRQPC). Residues glutamine 457, 474 to 481 (GPPGTGKT), tyrosine 683, and glutamate 813 each bind ATP. The disordered stretch occupies residues 977–998 (QGQTNGPAAGRGAMKGKSGRGG).

Belongs to the DNA2/NAM7 helicase family.

The protein localises to the cytoplasm. It is found in the P-body. The catalysed reaction is ATP + H2O = ADP + phosphate + H(+). Its function is as follows. RNA-dependent helicase required for nonsense-mediated decay (NMD) of aberrant mRNAs containing premature stop codons and modulates the expression level of normal mRNAs. The formation of an rent1-rent2-rent3 surveillance complex is believed to activate NMD. The protein is Putative regulator of nonsense transcripts 1 (rent1) of Takifugu rubripes (Japanese pufferfish).